Consider the following 247-residue polypeptide: tRNA pseudouridine synthase A 1 (247 aa).

The active-site Nucleophile is aspartate 53. Tyrosine 111 lines the substrate pocket.

Belongs to the tRNA pseudouridine synthase TruA family. In terms of assembly, homodimer.

It carries out the reaction uridine(38/39/40) in tRNA = pseudouridine(38/39/40) in tRNA. Functionally, formation of pseudouridine at positions 38, 39 and 40 in the anticodon stem and loop of transfer RNAs. The protein is tRNA pseudouridine synthase A 1 of Bacillus cereus (strain ATCC 10987 / NRS 248).